The sequence spans 250 residues: 5'-nucleotidase SurE (250 aa).

4 residues coordinate a divalent metal cation: Asp-8, Asp-9, Ser-39, and Asn-95.

It belongs to the SurE nucleotidase family. Requires a divalent metal cation as cofactor.

Its subcellular location is the cytoplasm. It carries out the reaction a ribonucleoside 5'-phosphate + H2O = a ribonucleoside + phosphate. Functionally, nucleotidase that shows phosphatase activity on nucleoside 5'-monophosphates. The chain is 5'-nucleotidase SurE from Syntrophobacter fumaroxidans (strain DSM 10017 / MPOB).